We begin with the raw amino-acid sequence, 71 residues long: Protein translocase subunit SecE (71 aa).

Residues 43–63 (VAGAGILAVGAVGFIIYVLLT) traverse the membrane as a helical segment.

Belongs to the SecE/SEC61-gamma family. Component of the Sec protein translocase complex. Heterotrimer consisting of SecY (alpha), SecG (beta) and SecE (gamma) subunits. The heterotrimers can form oligomers, although 1 heterotrimer is thought to be able to translocate proteins. Interacts with the ribosome. May interact with SecDF, and other proteins may be involved.

It localises to the cell membrane. Its function is as follows. Essential subunit of the Sec protein translocation channel SecYEG. Clamps together the 2 halves of SecY. May contact the channel plug during translocation. This is Protein translocase subunit SecE from Methanosarcina mazei (strain ATCC BAA-159 / DSM 3647 / Goe1 / Go1 / JCM 11833 / OCM 88) (Methanosarcina frisia).